A 495-amino-acid chain; its full sequence is Probable serine/threonine-protein kinase DDB_G0292354 (495 aa).

The region spanning 16-275 (WTVVKKIGQG…PNYVFLQTLL (260 aa)) is the Protein kinase domain. ATP is bound by residues 22 to 30 (IGQGAFGEI) and Lys-45. Asp-136 serves as the catalytic Proton acceptor. A disordered region spans residues 293–469 (EVQTNSGASS…NGNGSNSQPI (177 aa)). 2 stretches are compositionally biased toward low complexity: residues 295-333 (QTNSGASSSSSNTTQQQQQQQQQQQQRNLNQSGLNNSSA) and 354-364 (NNSNNNNNNNN). Positions 385–395 (ESNSQIANSSE) are enriched in polar residues. Over residues 435–466 (SNNNNINNNNNNYNNNNNNNNNSHMNGNGSNS) the composition is skewed to low complexity.

Belongs to the protein kinase superfamily. CK1 Ser/Thr protein kinase family.

In Dictyostelium discoideum (Social amoeba), this protein is Probable serine/threonine-protein kinase DDB_G0292354.